A 408-amino-acid chain; its full sequence is Arginine biosynthesis bifunctional protein ArgJ (408 aa).

Residues T158, K184, T195, E281, N403, and T408 each contribute to the substrate site. The Nucleophile role is filled by T195.

This sequence belongs to the ArgJ family. As to quaternary structure, heterotetramer of two alpha and two beta chains.

The protein localises to the cytoplasm. The enzyme catalyses N(2)-acetyl-L-ornithine + L-glutamate = N-acetyl-L-glutamate + L-ornithine. The catalysed reaction is L-glutamate + acetyl-CoA = N-acetyl-L-glutamate + CoA + H(+). It functions in the pathway amino-acid biosynthesis; L-arginine biosynthesis; L-ornithine and N-acetyl-L-glutamate from L-glutamate and N(2)-acetyl-L-ornithine (cyclic): step 1/1. The protein operates within amino-acid biosynthesis; L-arginine biosynthesis; N(2)-acetyl-L-ornithine from L-glutamate: step 1/4. Its function is as follows. Catalyzes two activities which are involved in the cyclic version of arginine biosynthesis: the synthesis of N-acetylglutamate from glutamate and acetyl-CoA as the acetyl donor, and of ornithine by transacetylation between N(2)-acetylornithine and glutamate. The sequence is that of Arginine biosynthesis bifunctional protein ArgJ from Bacillus cereus (strain ATCC 14579 / DSM 31 / CCUG 7414 / JCM 2152 / NBRC 15305 / NCIMB 9373 / NCTC 2599 / NRRL B-3711).